The following is a 487-amino-acid chain: Protein DETOXIFICATION 10 (487 aa).

A run of 12 helical transmembrane segments spans residues 35 to 55 (LICF…IQII), 73 to 93 (FAVS…SCAL), 122 to 142 (LVCL…VILG), 155 to 175 (AAWL…IRYF), 184 to 204 (LLVT…LLVY), 211 to 231 (IGGA…LGSF), 264 to 284 (AAML…SGLL), 293 to 313 (VLSI…AIAA), 333 to 353 (IVVY…SMSL), 377 to 397 (MAPL…LSGV), 412 to 432 (FGAF…WVHL), and 435 to 455 (VGLW…LALV).

Belongs to the multi antimicrobial extrusion (MATE) (TC 2.A.66.1) family.

It localises to the membrane. The chain is Protein DETOXIFICATION 10 from Arabidopsis thaliana (Mouse-ear cress).